The sequence spans 461 residues: Steroidogenic factor 1 (461 aa).

The nuclear receptor DNA-binding region spans 10–85 (DELCPVCGDK…VGMRLEAVRA (76 aa)). An NR C4-type zinc finger spans residues 13–33 (CPVCGDKVSGYHYGLLTCESC). 3 positions are modified to N6-acetyllysine: K34, K38, and K72. Residues 49–73 (CTESQSCKIDKTLRKRCPFCRFQKC) form an NR C4-type zinc finger. Residue K119 forms a Glycyl lysine isopeptide (Lys-Gly) (interchain with G-Cter in SUMO) linkage. The segment at 119–153 (KLETGPPMGVPPPPPPPPDYMLPPGLHVPEPKGLA) is disordered. The segment covering 126 to 139 (MGVPPPPPPPPDYM) has biased composition (pro residues). A Glycyl lysine isopeptide (Lys-Gly) (interchain with G-Cter in SUMO) cross-link involves residue K194. S203 carries the phosphoserine; by CDK7 modification. The 238-residue stretch at 222 to 459 (GVPELILQLL…NLLIEMLQAK (238 aa)) folds into the NR LBD domain. 3 residues coordinate a 1,2-diacyl-sn-glycero-3-phosphocholine: G341, Y436, and K440.

The protein belongs to the nuclear hormone receptor family. NR5 subfamily. Binds DNA as a monomer. Part of a complex consisting of SFPQ, NONO and NR5A1. Interacts with NR0B2. Interacts with DGKQ and CDK7. Binds to and activated by HIPK3. Acetylation stimulates the transcriptional activity. In terms of processing, sumoylation reduces CDK7-mediated phosphorylation on Ser-203. Post-translationally, phosphorylated on Ser-203 by CDK7. This phosphorylation promotes transcriptional activity.

The protein localises to the nucleus. In terms of biological role, transcriptional activator. Seems to be essential for sexual differentiation and formation of the primary steroidogenic tissues. Binds to the Ad4 site found in the promoter region of steroidogenic P450 genes such as CYP11A, CYP11B and CYP21B. Also regulates the AMH/Muellerian inhibiting substance gene as well as the AHCH and STAR genes. 5'-YCAAGGYC-3' and 5'-RRAGGTCA-3' are the consensus sequences for the recognition by NR5A1. The SFPQ-NONO-NR5A1 complex binds to the CYP17 promoter and regulates basal and cAMP-dependent transcriptional activity. Binds phospholipids with a phosphatidylinositol (PI) headgroup, in particular PI(3,4)P2 and PI(3,4,5)P3. Activated by the phosphorylation of NR5A1 by HIPK3 leading to increased steroidogenic gene expression upon cAMP signaling pathway stimulation. This is Steroidogenic factor 1 (NR5A1) from Equus caballus (Horse).